The following is a 225-amino-acid chain: UPF0758 protein BP1235 (225 aa).

One can recognise an MPN domain in the interval 103-225 (ALANPDLVRR…TVSMAAQGHL (123 aa)). 3 residues coordinate Zn(2+): His-174, His-176, and Asp-187. A JAMM motif motif is present at residues 174-187 (HNHPGGTAAASAAD).

This sequence belongs to the UPF0758 family.

The protein is UPF0758 protein BP1235 of Bordetella pertussis (strain Tohama I / ATCC BAA-589 / NCTC 13251).